A 162-amino-acid polypeptide reads, in one-letter code: Ecotin (162 aa).

An N-terminal signal peptide occupies residues 1 to 18; it reads MFVPAVVFAALASTSAWA. Cysteine 70 and cysteine 107 are oxidised to a cystine.

The protein belongs to the protease inhibitor I11 (ecotin) family. In terms of assembly, homodimer.

It localises to the periplasm. Its function is as follows. General inhibitor of pancreatic serine proteases: inhibits chymotrypsin, trypsin, elastases, factor X, kallikrein as well as a variety of other proteases. The polypeptide is Ecotin (Salmonella choleraesuis (strain SC-B67)).